A 129-amino-acid polypeptide reads, in one-letter code: Putative CC-type chemokine FPV061 (129 aa).

This sequence belongs to the intercrine beta (chemokine CC) family. Highly divergent.

The chain is Putative CC-type chemokine FPV061 from Fowlpox virus (strain NVSL) (FPV).